A 113-amino-acid chain; its full sequence is Iron-sulfur cluster insertion protein ErpA (113 aa).

3 residues coordinate iron-sulfur cluster: cysteine 41, cysteine 105, and cysteine 107.

It belongs to the HesB/IscA family. As to quaternary structure, homodimer. Iron-sulfur cluster is required as a cofactor.

Functionally, required for insertion of 4Fe-4S clusters for at least IspG. This chain is Iron-sulfur cluster insertion protein ErpA, found in Hydrogenovibrio crunogenus (strain DSM 25203 / XCL-2) (Thiomicrospira crunogena).